The following is a 34-amino-acid chain: MSDIN-like toxin proprotein 2 (34 aa).

Positions 1 to 10 (MSDINTARLP) are excised as a propeptide. The segment at residues 11-20 (FYQFPDFKYP) is a cross-link (cyclopeptide (Phe-Pro)). Residues 21-34 (CVGDDIEMVLARGE) constitute a propeptide that is removed on maturation.

This sequence belongs to the MSDIN fungal toxin family. In terms of processing, processed by the macrocyclase-peptidase enzyme POPB to yield a toxic cyclic decapeptide. POPB first removes 10 residues from the N-terminus. Conformational trapping of the remaining peptide forces the enzyme to release this intermediate rather than proceed to macrocyclization. The enzyme rebinds the remaining peptide in a different conformation and catalyzes macrocyclization of the N-terminal 10 residues.

In terms of biological role, probable toxin that belongs to the MSDIN-like toxin family responsible for a large number of food poisoning cases and deaths. This chain is MSDIN-like toxin proprotein 2, found in Amanita bisporigera (Destroying angel).